The chain runs to 164 residues: Pheromone-binding protein 2 (164 aa).

An N-terminal signal peptide occupies residues 1–22; the sequence is MIRKVLLSVLLAVLMTINLGQA. 3 cysteine pairs are disulfide-bonded: Cys41-Cys76, Cys72-Cys130, and Cys119-Cys139.

It belongs to the PBP/GOBP family. As to expression, antenna.

This major soluble protein in olfactory sensilla of male moths might serve to solubilize the extremely hydrophobic pheromone molecules and to transport pheromone through the aqueous lymph to receptors located on olfactory cilia. This Antheraea pernyi (Chinese oak silk moth) protein is Pheromone-binding protein 2.